The chain runs to 479 residues: Aspartyl/glutamyl-tRNA(Asn/Gln) amidotransferase subunit B (479 aa).

This sequence belongs to the GatB/GatE family. GatB subfamily. As to quaternary structure, heterotrimer of A, B and C subunits.

The catalysed reaction is L-glutamyl-tRNA(Gln) + L-glutamine + ATP + H2O = L-glutaminyl-tRNA(Gln) + L-glutamate + ADP + phosphate + H(+). It catalyses the reaction L-aspartyl-tRNA(Asn) + L-glutamine + ATP + H2O = L-asparaginyl-tRNA(Asn) + L-glutamate + ADP + phosphate + 2 H(+). Allows the formation of correctly charged Asn-tRNA(Asn) or Gln-tRNA(Gln) through the transamidation of misacylated Asp-tRNA(Asn) or Glu-tRNA(Gln) in organisms which lack either or both of asparaginyl-tRNA or glutaminyl-tRNA synthetases. The reaction takes place in the presence of glutamine and ATP through an activated phospho-Asp-tRNA(Asn) or phospho-Glu-tRNA(Gln). The sequence is that of Aspartyl/glutamyl-tRNA(Asn/Gln) amidotransferase subunit B from Streptococcus pyogenes serotype M12 (strain MGAS2096).